Reading from the N-terminus, the 201-residue chain is Acyl-homoserine-lactone synthase (201 aa).

The protein belongs to the autoinducer synthase family.

The enzyme catalyses a fatty acyl-[ACP] + S-adenosyl-L-methionine = an N-acyl-L-homoserine lactone + S-methyl-5'-thioadenosine + holo-[ACP] + H(+). In terms of biological role, required for the synthesis of BHL (N-butanoyl-L-homoserine lactone), and HHL (N-hexanoyl-L-homoserine lactone) autoinducer molecules which bind to RhlR and thus acts in elastase biosynthesis regulation. This is Acyl-homoserine-lactone synthase (rhlI) from Pseudomonas aeruginosa (strain ATCC 15692 / DSM 22644 / CIP 104116 / JCM 14847 / LMG 12228 / 1C / PRS 101 / PAO1).